A 333-amino-acid chain; its full sequence is CMP-N-acetylneuraminate-beta-galactosamide-alpha-2,3-sialyltransferase 4 (333 aa).

The Cytoplasmic portion of the chain corresponds to 1-8; sequence MVSKSRWK. Residues 9 to 26 traverse the membrane as a helical; Signal-anchor for type II membrane protein segment; sequence LLAMLALVLVVMVWYSIS. Topologically, residues 27 to 333 are lumenal; the sequence is REDRYIELFY…MGAIKNLTSF (307 aa). N-linked (GlcNAc...) asparagine glycosylation is found at Asn-61, Asn-131, Asn-310, and Asn-329. Cys-120 and Cys-273 are joined by a disulfide.

This sequence belongs to the glycosyltransferase 29 family. The soluble form derives from the membrane form by proteolytic processing. As to expression, highly expressed in adult placenta, heart and kidney.

The protein resides in the golgi apparatus. Its subcellular location is the golgi stack membrane. It is found in the secreted. It catalyses the reaction a beta-D-galactosyl-(1-&gt;3)-N-acetyl-beta-D-galactosaminyl derivative + CMP-N-acetyl-beta-neuraminate = an N-acetyl-alpha-neuraminyl-(2-&gt;3)-beta-D-galactosyl-(1-&gt;3)-N-acetyl-beta-D-galactosaminyl derivative + CMP + H(+). The catalysed reaction is a beta-D-galactosyl-(1-&gt;3)-N-acetyl-alpha-D-galactosaminyl derivative + CMP-N-acetyl-beta-neuraminate = an N-acetyl-alpha-neuraminyl-(2-&gt;3)-beta-D-galactosyl-(1-&gt;3)-N-acetyl-alpha-D-galactosaminyl derivative + CMP + H(+). It carries out the reaction a beta-D-galactosyl-(1-&gt;4)-N-acetyl-beta-D-glucosaminyl derivative + CMP-N-acetyl-beta-neuraminate = an N-acetyl-alpha-neuraminyl-(2-&gt;3)-beta-D-galactosyl-(1-&gt;4)-N-acetyl-beta-D-glucosaminyl derivative + CMP + H(+). The enzyme catalyses a ganglioside GM1 (d18:1(4E)) + CMP-N-acetyl-beta-neuraminate = a ganglioside GD1a (d18:1(4E)) + CMP + H(+). It catalyses the reaction a ganglioside GA1 (d18:1(4E)) + CMP-N-acetyl-beta-neuraminate = a ganglioside GM1b (d18:1(4E)) + CMP + H(+). The catalysed reaction is a ganglioside GT1c (d18:1(4E)) + CMP-N-acetyl-beta-neuraminate = a ganglioside GQ1c (d18:1(4E)) + CMP + H(+). It carries out the reaction a neolactoside nLc4Cer + CMP-N-acetyl-beta-neuraminate = a neolactoside IV(3)-alpha-NeuAc-nLc4Cer + CMP + H(+). The enzyme catalyses a neolactoside nLc4Cer(d18:1(4E)) + CMP-N-acetyl-beta-neuraminate = a neolactoside IV(3)-alpha-NeuAc-nLc4Cer(d18:1(4E)) + CMP + H(+). It functions in the pathway protein modification; protein glycosylation. The protein operates within glycolipid biosynthesis. Functionally, a beta-galactoside alpha2-3 sialyltransferase involved in terminal sialylation of glycoproteins and glycolipids. Catalyzes the transfer of sialic acid (N-acetyl-neuraminic acid; Neu5Ac) from the nucleotide sugar donor CMP-Neu5Ac onto acceptor Galbeta-(1-&gt;3)-GalNAc- and Galbeta-(1-&gt;4)-GlcNAc-terminated glycoconjugates through an alpha2-3 linkage. Plays a major role in hemostasis. Responsible for sialylation of plasma VWF/von Willebrand factor, preventing its recognition by asialoglycoprotein receptors (ASGPR) and subsequent clearance. Regulates ASGPR-mediated clearance of platelets. Participates in the biosynthesis of the sialyl Lewis X epitopes, both on O- and N-glycans, which are recognized by SELE/E-selectin, SELP/P-selectin and SELL/L-selectin. Essential for selectin-mediated rolling and adhesion of leukocytes during extravasation. Contributes to adhesion and transendothelial migration of neutrophils likely through terminal sialylation of CXCR2. In glycosphingolipid biosynthesis, sialylates GM1 and GA1 gangliosides to form GD1a and GM1b, respectively. Metabolizes brain c-series ganglioside GT1c forming GQ1c. Synthesizes ganglioside LM1 (IV3Neu5Ac-nLc4Cer), a major structural component of peripheral nerve myelin. The chain is CMP-N-acetylneuraminate-beta-galactosamide-alpha-2,3-sialyltransferase 4 (ST3GAL4) from Homo sapiens (Human).